Here is a 542-residue protein sequence, read N- to C-terminus: Putative cysteine ligase BshC (542 aa).

Positions 458–487 (VAKNAAIIQAQIEFLQQTLERALLSKHEVE) form a coiled coil.

This sequence belongs to the BshC family.

Its function is as follows. Involved in bacillithiol (BSH) biosynthesis. May catalyze the last step of the pathway, the addition of cysteine to glucosamine malate (GlcN-Mal) to generate BSH. The sequence is that of Putative cysteine ligase BshC from Geobacillus thermodenitrificans (strain NG80-2).